The primary structure comprises 100 residues: Integration host factor subunit alpha (100 aa).

This sequence belongs to the bacterial histone-like protein family. In terms of assembly, heterodimer of an alpha and a beta chain.

In terms of biological role, this protein is one of the two subunits of integration host factor, a specific DNA-binding protein that functions in genetic recombination as well as in transcriptional and translational control. This chain is Integration host factor subunit alpha, found in Caulobacter sp. (strain K31).